A 162-amino-acid polypeptide reads, in one-letter code: Phosphopantetheine adenylyltransferase (162 aa).

Position 9 (Ser9) interacts with substrate. Residues 9-10 and His17 contribute to the ATP site; that span reads SF. Substrate contacts are provided by Lys41, Leu73, and Lys87. ATP-binding positions include 88 to 90, Glu98, and 123 to 129; these read GLR and CSFLSSS.

The protein belongs to the bacterial CoaD family. Homohexamer. Mg(2+) serves as cofactor.

It is found in the cytoplasm. The enzyme catalyses (R)-4'-phosphopantetheine + ATP + H(+) = 3'-dephospho-CoA + diphosphate. It participates in cofactor biosynthesis; coenzyme A biosynthesis; CoA from (R)-pantothenate: step 4/5. In terms of biological role, reversibly transfers an adenylyl group from ATP to 4'-phosphopantetheine, yielding dephospho-CoA (dPCoA) and pyrophosphate. The sequence is that of Phosphopantetheine adenylyltransferase from Natranaerobius thermophilus (strain ATCC BAA-1301 / DSM 18059 / JW/NM-WN-LF).